Consider the following 126-residue polypeptide: Large ribosomal subunit protein bL17 (126 aa).

Belongs to the bacterial ribosomal protein bL17 family. In terms of assembly, part of the 50S ribosomal subunit. Contacts protein L32.

In Lysinibacillus sphaericus (strain C3-41), this protein is Large ribosomal subunit protein bL17.